The primary structure comprises 156 residues: Arginine repressor (156 aa).

It belongs to the ArgR family.

Its subcellular location is the cytoplasm. The protein operates within amino-acid biosynthesis; L-arginine biosynthesis [regulation]. Regulates arginine biosynthesis genes. The protein is Arginine repressor of Photorhabdus laumondii subsp. laumondii (strain DSM 15139 / CIP 105565 / TT01) (Photorhabdus luminescens subsp. laumondii).